Reading from the N-terminus, the 288-residue chain is Lysosomal thioesterase PPT2-B (288 aa).

The first 20 residues, 1–20 (MRGYLLLLPLLLCLVDNSVS), serve as a signal peptide directing secretion. A disulfide bond links C95 and C103. The active-site Nucleophile is S97. N-linked (GlcNAc...) asparagine glycosylation occurs at N143. An intrachain disulfide couples C151 to C162. N-linked (GlcNAc...) asparagine glycosylation occurs at N192. Residues D214 and H269 contribute to the active site. A glycan (N-linked (GlcNAc...) asparagine) is linked at N275.

It belongs to the palmitoyl-protein thioesterase family.

Its subcellular location is the lysosome. The enzyme catalyses hexadecanoyl-CoA + H2O = hexadecanoate + CoA + H(+). The catalysed reaction is S-hexadecanoyl-N-acetylcysteamine + H2O = N-acetylcysteamine + hexadecanoate + H(+). Functionally, catalyzes the cleavage of thioester bonds from S-palmitoyl-CoA or S-palmitoyl-N-acetylcysteamine (unbranched structures) but does not have activity against palmitoylcysteine or palmitoylated proteins, branched structures or bulky head groups. Conversely, hydrolyzes both long and short chain fatty acyl-CoA substrate. The sequence is that of Lysosomal thioesterase PPT2-B (ppt2-b) from Xenopus laevis (African clawed frog).